The chain runs to 429 residues: WRKY transcription factor 44 (429 aa).

Positions 159–223 form a DNA-binding region, WRKY 1; it reads TGDRSSVDGY…YQGEHNHSKP (65 aa). Residues C190, C195, H218, and H220 each contribute to the Zn(2+) site. Disordered stretches follow at residues 214–279 and 292–348; these read YQGE…RTEK and AVPR…SDSL. 3 stretches are compositionally biased toward polar residues: residues 254-275, 295-313, and 334-345; these read QDPNNNLYSPLWNNQSNDSTQN, RSTNSNPGTSDSGCKSSQC, and SEAGVSQGSVES. The WRKY 2 DNA-binding region spans 343 to 408; sequence VESDSLEDGF…YEGKHNHHLL (66 aa). Positions 374, 379, 403, and 405 each coordinate Zn(2+). Residues 410–422 are compositionally biased toward low complexity; sequence SPPSSSTLPFNSP. Residues 410–429 form a disordered region; the sequence is SPPSSSTLPFNSPQLSKQTI.

The protein belongs to the WRKY group I family. In terms of tissue distribution, leaf promordia, trichomes, atrichoblasts, fertilized eggs, seed coat.

It localises to the nucleus. Transcription factor. Interacts specifically with the W box (5'-(T)TGAC[CT]-3'), a frequently occurring elicitor-responsive cis-acting element. Regulates trichome development, production of mucilage and tannin in seed coats, and maybe root hair development. This Arabidopsis thaliana (Mouse-ear cress) protein is WRKY transcription factor 44 (WRKY44).